The chain runs to 472 residues: Mixed lineage kinase domain-like protein (472 aa).

The N-terminal bundle and brace (NBB); mediates INSP6 binding stretch occupies residues 1–143 (MDKLGQIIKL…QEDRQDAEED (143 aa)). The stretch at 61–81 (LGRFDEVLKEANQQIEKFSKK) forms a coiled coil. Ser124 carries the post-translational modification Phosphoserine. The stretch at 138–229 (QDAEEDGNEN…VFNNPQAESV (92 aa)) forms a coiled coil. In terms of domain architecture, Protein kinase spans 192 to 456 (GPPWTKLKTS…DGRSLSGRER (265 aa)). ATP-binding positions include 198 to 206 (LKTSKMSTI) and Lys219. Ser345 and Ser347 each carry phosphoserine; by RIPK3. Thr349 carries the post-translational modification Phosphothreonine; by RIPK3. At Ser352 the chain carries Phosphoserine; by RIPK3.

This sequence belongs to the protein kinase superfamily. In terms of assembly, homooligomer. Homotrimer; forms homotrimers on necroptosis induction. Upon TNF-induced necrosis, forms in complex with PGAM5, RIPK1 and RIPK3. Within this complex, may play a role in the proper targeting of RIPK1-RIPK3 to its downstream effector PGAM5. Interacts with RIPK3; the interaction is direct and promotes its phosphorylation and subsequent activation. Phosphorylation by RIPK3 induces a conformational switch that is required for necroptosis. It also induces homotrimerization and localization to the plasma membrane. Highly expressed in thymus, colon, intestine, liver, spleen and lung. Expressed at much lower level in skeletal muscle, heart and kidney. Not detected in brain.

It is found in the cytoplasm. The protein localises to the cell membrane. The protein resides in the nucleus. With respect to regulation, activated via binding to highly phosphorylated inositol phosphates such as inositolhexakisphosphate (InsP6) which mediates the release of an N-terminal auto-inhibitory region. Activation requires not only RIPK3-dependent phosphorylation but also binding to highly phosphorylated inositol phosphates. Its function is as follows. Pseudokinase that plays a key role in TNF-induced necroptosis, a programmed cell death process. Does not have protein kinase activity. Activated following phosphorylation by RIPK3, leading to homotrimerization, localization to the plasma membrane and execution of programmed necrosis characterized by calcium influx and plasma membrane damage. In addition to TNF-induced necroptosis, necroptosis can also take place in the nucleus in response to orthomyxoviruses infection: following ZBP1 activation, which senses double-stranded Z-RNA structures, nuclear RIPK3 catalyzes phosphorylation and activation of MLKL, promoting disruption of the nuclear envelope and leakage of cellular DNA into the cytosol. Binds to highly phosphorylated inositol phosphates such as inositolhexakisphosphate (InsP6) which is essential for its necroptotic function. The polypeptide is Mixed lineage kinase domain-like protein (Mus musculus (Mouse)).